Reading from the N-terminus, the 59-residue chain is MAKLQITLTRSVIGRPETQRKTVEALGLKKTNSSVVVEDNPAIRGQINKVSHLVTVEEK.

It belongs to the universal ribosomal protein uL30 family. In terms of assembly, part of the 50S ribosomal subunit.

The protein is Large ribosomal subunit protein uL30 of Staphylococcus saprophyticus subsp. saprophyticus (strain ATCC 15305 / DSM 20229 / NCIMB 8711 / NCTC 7292 / S-41).